The chain runs to 309 residues: Porphobilinogen deaminase (309 aa).

An S-(dipyrrolylmethanemethyl)cysteine modification is found at C243.

This sequence belongs to the HMBS family. Monomer. Requires dipyrromethane as cofactor.

It carries out the reaction 4 porphobilinogen + H2O = hydroxymethylbilane + 4 NH4(+). The protein operates within porphyrin-containing compound metabolism; protoporphyrin-IX biosynthesis; coproporphyrinogen-III from 5-aminolevulinate: step 2/4. In terms of biological role, tetrapolymerization of the monopyrrole PBG into the hydroxymethylbilane pre-uroporphyrinogen in several discrete steps. This Deinococcus geothermalis (strain DSM 11300 / CIP 105573 / AG-3a) protein is Porphobilinogen deaminase.